A 548-amino-acid chain; its full sequence is Stretch-activated cation channel MID1 (548 aa).

Positions 1-20 are cleaved as a signal peptide; sequence MIVWQALFVVYCLFTTSIHG. Residues 21–341 are Extracellular-facing; that stretch reads LFQDFNPFAN…YLTKKISNGD (321 aa). N-linked (GlcNAc...) asparagine glycans are attached at residues Asn-32, Asn-70, Asn-112, Asn-125, Asn-159, Asn-175, Asn-228, Asn-238, Asn-265, Asn-282, Asn-285, Asn-291, and Asn-324. A helical transmembrane segment spans residues 342 to 358; that stretch reads GLSSVGGILFSHVYFTT. Topologically, residues 359 to 548 are cytoplasmic; the sequence is RSTDVCSLIF…LMVIHPLDDT (190 aa).

In terms of assembly, forms an oligomer with a molecular mass of 200 kDa by disulfide bonds. Interacts with CCH1 to form a Ca(2+) influx channel. N-glycosylated.

The protein localises to the cell membrane. Its function is as follows. Calcium-permeable, cation-selective stretch-activated channel (SAC) that functions together with CCH1 to mediate calcium entry into cells. Required during mating. Together with CCH1, essential for tolerance to iron stress, which leads to an increased oxidative poise, and to cold stress. This chain is Stretch-activated cation channel MID1 (MID1), found in Saccharomyces cerevisiae (strain ATCC 204508 / S288c) (Baker's yeast).